Consider the following 489-residue polypeptide: MSEPSAAVGQRPGGESAPAHRLWGGRFTAGPAESVAALSRSIDVDWRLARYDLRASKAHARVLAAAGLLDADELAQLLAALDELDRACASGTFQPAAADEDVHTALERALLERLGPLGGKLRAGRSRNDQIATDLRLYLRDHVRLLVRRLVDLQWALVDQAERHLDLPAPGMTHLQHAQPVLFAHHLLAHVAAFARDVDRFRDWDRRAAICPLGAGALAGSSLPLDPHAVAAELGFTAPAANSIDAVSDRDFAAEFAFAAALVGVHLSRLGEEIVLWCSQEFGWVELDDAYATGSSIMPQKKNPDVAELARGKAGRLIGNLTSLLTMLKGLPLAYDRDLQEDKFPVFDSLDTLLLVLPAMTGLVATMRVKADRVAAAAPAGFSLATDVAEALVRRGVPFHEAHQAVGRLVAWCAAHGTDLSAVDDDQLAEISPYFTPENRAEVRTVLSVRGAIGARAAYGGTAPERVAEQLAAVRAALADSAAWADAAP.

Residues 1-20 (MSEPSAAVGQRPGGESAPAH) form a disordered region.

The protein belongs to the lyase 1 family. Argininosuccinate lyase subfamily.

It is found in the cytoplasm. The catalysed reaction is 2-(N(omega)-L-arginino)succinate = fumarate + L-arginine. Its pathway is amino-acid biosynthesis; L-arginine biosynthesis; L-arginine from L-ornithine and carbamoyl phosphate: step 3/3. This chain is Argininosuccinate lyase, found in Acidothermus cellulolyticus (strain ATCC 43068 / DSM 8971 / 11B).